The sequence spans 844 residues: DNA mismatch repair protein MutS (844 aa).

610-617 is an ATP binding site; the sequence is GPNMGGKS.

The protein belongs to the DNA mismatch repair MutS family.

Its function is as follows. This protein is involved in the repair of mismatches in DNA. It is possible that it carries out the mismatch recognition step. This protein has a weak ATPase activity. The polypeptide is DNA mismatch repair protein MutS (Francisella tularensis subsp. mediasiatica (strain FSC147)).